Consider the following 235-residue polypeptide: RING-H2 finger protein ATL17 (235 aa).

A helical membrane pass occupies residues M1–Y21. The RING-type; atypical zinc-finger motif lies at C76–R118. The tract at residues V143 to K167 is disordered.

It belongs to the RING-type zinc finger family. ATL subfamily.

Its subcellular location is the membrane. It carries out the reaction S-ubiquitinyl-[E2 ubiquitin-conjugating enzyme]-L-cysteine + [acceptor protein]-L-lysine = [E2 ubiquitin-conjugating enzyme]-L-cysteine + N(6)-ubiquitinyl-[acceptor protein]-L-lysine.. Its pathway is protein modification; protein ubiquitination. Functionally, may be involved in the early steps of the plant defense signaling pathway. This is RING-H2 finger protein ATL17 (ATL17) from Arabidopsis thaliana (Mouse-ear cress).